Consider the following 330-residue polypeptide: Ribose operon repressor (330 aa).

Residues 2–56 (ATMKDVARLAGVSTSTVSHVINKDRFVSEAITAKVEAAIKELNYAPSALARSLKL) form the HTH lacI-type domain. Positions 4–23 (MKDVARLAGVSTSTVSHVIN) form a DNA-binding region, H-T-H motif.

Functionally, transcriptional repressor for the ribose rbsDACBK operon. RbsR binds to a region of perfect dyad symmetry spanning the rbs operon transcriptional start site. The affinity for the rbs operator is reduced by addition of ribose, consistent with ribose being the inducer of the operon. The polypeptide is Ribose operon repressor (rbsR) (Escherichia coli O6:H1 (strain CFT073 / ATCC 700928 / UPEC)).